Consider the following 397-residue polypeptide: Aurora kinase A (397 aa).

A disordered region spans residues 1–118; it reads MDRCKENCVS…SIQKTEDSKK (118 aa). 2 stretches are compositionally biased toward polar residues: residues 29-55 and 84-102; these read QIPS…SQRV and RLSN…SGNN. 2 positions are modified to phosphoserine: serine 40 and serine 50. The span at 103–118 shows a compositional bias: basic and acidic residues; it reads SEKEQTSIQKTEDSKK. One can recognise a Protein kinase domain in the interval 126–376; sequence FDIGRPLGKG…LAEVLEHPWI (251 aa). ATP-binding positions include lysine 136, lysine 155, and 203-206; that span reads LEYA. Residue aspartate 249 is the Proton acceptor of the active site. Lysine 251 participates in a covalent cross-link: Glycyl lysine isopeptide (Lys-Gly) (interchain with G-Cter in SUMO2). Residues 253-254 and aspartate 267 contribute to the ATP site; that span reads EN. Positions 273-286 are activation segment; the sequence is HAPSSRRTTLCGTL. A phosphothreonine mark is found at threonine 280 and threonine 281. A Phosphoserine; by PKA and PAK modification is found at serine 335. Polar residues predominate over residues 378–387; it reads ANSSKPPTGH. The tract at residues 378–397 is disordered; that stretch reads ANSSKPPTGHNSKEATSKSS. Over residues 388-397 the composition is skewed to basic and acidic residues; sequence NSKEATSKSS.

This sequence belongs to the protein kinase superfamily. Ser/Thr protein kinase family. Aurora subfamily. Part of a complex composed of NEDD9, AURKA and CTTN; within the complex NEDD9 acts as a scaffold protein and is required for complex formation. Identified in a complex with AUNIP and NIN. Interacts with CPEB1, JTB, TACC1, TPX2, PPP2CA, as well as with the protein phosphatase type 1 (PP1) isoforms PPP1CA, PPP1CB and PPP1CC. Also interacts with its substrates ARHGEF2, BORA, KIF2A, PARD3, and p53/TP53. Interaction with BORA promotes phosphorylation of PLK1. Interacts with FBXL7 and CIMAP3. Interacts with GADD45A, competing with its oligomerization. Interacts (via C-terminus) with AUNIP (via C-terminus). Interacts with SIRT2. Interacts with FRY; this interaction facilitates AURKA-mediated PLK1 phosphorylation. Interacts with MYCN; interaction is phospho-independent and triggers AURKA activation; AURKA competes with FBXW7 for binding to unphosphorylated MYCN but not for binding to phosphorylated MYCN. Interacts with HNRNPU. Interacts with AAAS. Interacts with KLHL18 and CUL3. Interacts with FOXP1. Interacts with HDAC6; AURKA-mediated phosphorylation of HDAC6 promotes deacetylation of alpha-tubulin. Activated by phosphorylation at Thr-281; this brings about a change in the conformation of the activation segment. Phosphorylation at Thr-281 varies during the cell cycle and is highest during M phase. Autophosphorylated at Thr-281 upon TPX2 binding. Thr-281 can be phosphorylated by several kinases, including PAK and PKA. Protein phosphatase type 1 (PP1) binds AURKA and inhibits its activity by dephosphorylating Thr-281 during mitosis. Phosphorylation at Ser-335 decreases the kinase activity. PPP2CA controls degradation by dephosphorylating Ser-52 at the end of mitosis. Phosphorylated in embryonic brain neurons. Post-translationally, ubiquitinated by CHFR, leading to its degradation by the proteasome. Ubiquitinated by the anaphase-promoting complex (APC), leading to its degradation by the proteasome. Ubiquitinated by the E3 ubiquitin-protein ligase complex SCF(FBXL7) during mitosis, leading to its degradation by the proteasome. Ubiquitinated by the CUL3-KLHL18 ligase leading to its activation at the centrosome which is required for initiating mitotic entry. Ubiquitination mediated by CUL3-KLHL18 ligase does not lead to its degradation by the proteasome. Detected in neurons in brain cortex and hippocampus (at protein level). Expressed in mammary gland and tumor.

The protein localises to the cytoplasm. The protein resides in the cytoskeleton. It is found in the microtubule organizing center. Its subcellular location is the centrosome. It localises to the spindle pole. The protein localises to the centriole. The protein resides in the cell projection. It is found in the neuron projection. Its subcellular location is the cilium. It localises to the cilium basal body. The protein localises to the basolateral cell membrane. It catalyses the reaction L-seryl-[protein] + ATP = O-phospho-L-seryl-[protein] + ADP + H(+). It carries out the reaction L-threonyl-[protein] + ATP = O-phospho-L-threonyl-[protein] + ADP + H(+). Its activity is regulated as follows. Activation of CDK1, appears to be an upstream event of AURKA activation. Phosphatase inhibitor-2 (PPP1R2) and TPX2 act also as activators. Inactivated by the G2 checkpoint. Inhibited by GADD45A and p53/TP53, and through dephosphorylation by protein phosphatase type 1 (PP1). MLN8054 is also a potent and selective inhibitor. Activated during the early phase of cilia disassembly in the presence of FBXL7 and CIMAP3. Inhibited by the small molecule inhibitor VX-680. In terms of biological role, mitotic serine/threonine kinase that contributes to the regulation of cell cycle progression. Associates with the centrosome and the spindle microtubules during mitosis and plays a critical role in various mitotic events including the establishment of mitotic spindle, centrosome duplication, centrosome separation as well as maturation, chromosomal alignment, spindle assembly checkpoint, and cytokinesis. Required for normal spindle positioning during mitosis and for the localization of NUMA1 and DCTN1 to the cell cortex during metaphase. Required for initial activation of CDK1 at centrosomes. Phosphorylates numerous target proteins, including ARHGEF2, BORA, BRCA1, CDC25B, DLGP5, HDAC6, KIF2A, LATS2, NDEL1, PARD3, PPP1R2, PLK1, RASSF1, TACC3, p53/TP53 and TPX2. Phosphorylates MCRS1 which is required for MCRS1-mediated kinetochore fiber assembly and mitotic progression. Regulates KIF2A tubulin depolymerase activity. Required for normal axon formation. Plays a role in microtubule remodeling during neurite extension. Important for microtubule formation and/or stabilization. Also acts as a key regulatory component of the p53/TP53 pathway, and particularly the checkpoint-response pathways critical for oncogenic transformation of cells, by phosphorylating and stabilizating p53/TP53. Phosphorylates its own inhibitors, the protein phosphatase type 1 (PP1) isoforms, to inhibit their activity. Inhibits cilia outgrowth. Required for cilia disassembly via phosphorylation of HDAC6 and subsequent deacetylation of alpha-tubulin. Regulates protein levels of the anti-apoptosis protein BIRC5 by suppressing the expression of the SCF(FBXL7) E3 ubiquitin-protein ligase substrate adapter FBXL7 through the phosphorylation of the transcription factor FOXP1. This chain is Aurora kinase A, found in Rattus norvegicus (Rat).